A 392-amino-acid chain; its full sequence is 8-amino-7-oxononanoate synthase 1 (392 aa).

109-110 (GF) provides a ligand contact to pyridoxal 5'-phosphate. H134 lines the substrate pocket. Pyridoxal 5'-phosphate is bound by residues S181, 206-209 (DDAH), and 237-240 (TLSK). K240 is modified (N6-(pyridoxal phosphate)lysine). Residue T354 participates in substrate binding.

It belongs to the class-II pyridoxal-phosphate-dependent aminotransferase family. BioF subfamily. Homodimer. Requires pyridoxal 5'-phosphate as cofactor.

It catalyses the reaction 6-carboxyhexanoyl-[ACP] + L-alanine + H(+) = (8S)-8-amino-7-oxononanoate + holo-[ACP] + CO2. It functions in the pathway cofactor biosynthesis; biotin biosynthesis. In terms of biological role, catalyzes the decarboxylative condensation of pimeloyl-[acyl-carrier protein] and L-alanine to produce 8-amino-7-oxononanoate (AON), [acyl-carrier protein], and carbon dioxide. The polypeptide is 8-amino-7-oxononanoate synthase 1 (kbl) (Bacillus subtilis (strain 168)).